We begin with the raw amino-acid sequence, 284 residues long: Phosphatidylglycerol--prolipoprotein diacylglyceryl transferase (284 aa).

7 consecutive transmembrane segments (helical) span residues isoleucine 14–isoleucine 34, tyrosine 62–tyrosine 82, phenylalanine 106–tyrosine 126, leucine 136–isoleucine 156, proline 190–alanine 210, glycine 218–tyrosine 238, and leucine 252–tyrosine 272. A 1,2-diacyl-sn-glycero-3-phospho-(1'-sn-glycerol) is bound at residue arginine 155.

It belongs to the Lgt family.

The protein localises to the cell inner membrane. It carries out the reaction L-cysteinyl-[prolipoprotein] + a 1,2-diacyl-sn-glycero-3-phospho-(1'-sn-glycerol) = an S-1,2-diacyl-sn-glyceryl-L-cysteinyl-[prolipoprotein] + sn-glycerol 1-phosphate + H(+). It functions in the pathway protein modification; lipoprotein biosynthesis (diacylglyceryl transfer). Catalyzes the transfer of the diacylglyceryl group from phosphatidylglycerol to the sulfhydryl group of the N-terminal cysteine of a prolipoprotein, the first step in the formation of mature lipoproteins. This chain is Phosphatidylglycerol--prolipoprotein diacylglyceryl transferase, found in Helicobacter pylori (strain ATCC 700392 / 26695) (Campylobacter pylori).